The chain runs to 567 residues: Potassium-transporting ATPase potassium-binding subunit (567 aa).

12 helical membrane-spanning segments follow: residues 3–23 (MIGW…TKPL), 64–84 (LTYT…IYGV), 136–156 (GLTH…MALI), 179–199 (LYVL…QGIP), 220–240 (VGPV…GGFF), 254–274 (LSNF…TNVF), 285–305 (WAIL…TYWA), 330–350 (FGLV…CGAV), 374–394 (IIVG…VLAI), 420–440 (AMLA…VGVV), 488–508 (LASA…AIAG), and 527–547 (GGLF…LTFF).

This sequence belongs to the KdpA family. The system is composed of three essential subunits: KdpA, KdpB and KdpC.

It localises to the cell inner membrane. In terms of biological role, part of the high-affinity ATP-driven potassium transport (or Kdp) system, which catalyzes the hydrolysis of ATP coupled with the electrogenic transport of potassium into the cytoplasm. This subunit binds the periplasmic potassium ions and delivers the ions to the membrane domain of KdpB through an intramembrane tunnel. In Bradyrhizobium diazoefficiens (strain JCM 10833 / BCRC 13528 / IAM 13628 / NBRC 14792 / USDA 110), this protein is Potassium-transporting ATPase potassium-binding subunit.